We begin with the raw amino-acid sequence, 24 residues long: Brevinin-1PTb (24 aa).

The cysteines at positions 18 and 24 are disulfide-linked.

In terms of tissue distribution, expressed by the skin glands.

The protein resides in the secreted. In terms of biological role, has antibacterial activity against the Gram-positive bacterium S.aureus ATCC 25923 and the Gram-negative bacterium E.coli ATCC 25726. This chain is Brevinin-1PTb, found in Pulchrana picturata (Malaysian fire frog).